The chain runs to 284 residues: NAD kinase (284 aa).

The Proton acceptor role is filled by Asp61. NAD(+)-binding positions include 61-62 (DG), Arg66, 136-137 (ND), Arg147, Lys164, Asp166, and Leu201.

Belongs to the NAD kinase family. The cofactor is a divalent metal cation.

The protein resides in the cytoplasm. The catalysed reaction is NAD(+) + ATP = ADP + NADP(+) + H(+). Functionally, involved in the regulation of the intracellular balance of NAD and NADP, and is a key enzyme in the biosynthesis of NADP. Catalyzes specifically the phosphorylation on 2'-hydroxyl of the adenosine moiety of NAD to yield NADP. The chain is NAD kinase from Dehalococcoides mccartyi (strain CBDB1).